The following is a 219-amino-acid chain: Thiamine-phosphate synthase (219 aa).

4-amino-2-methyl-5-(diphosphooxymethyl)pyrimidine contacts are provided by residues 44–48 and Asn79; that span reads QFREK. Asp80 and Asp99 together coordinate Mg(2+). Ser117 contacts 4-amino-2-methyl-5-(diphosphooxymethyl)pyrimidine. Residue 143 to 145 participates in 2-[(2R,5Z)-2-carboxy-4-methylthiazol-5(2H)-ylidene]ethyl phosphate binding; the sequence is TST. Residue Lys146 coordinates 4-amino-2-methyl-5-(diphosphooxymethyl)pyrimidine. 2-[(2R,5Z)-2-carboxy-4-methylthiazol-5(2H)-ylidene]ethyl phosphate is bound by residues Gly175 and 195–196; that span reads IS.

It belongs to the thiamine-phosphate synthase family. Requires Mg(2+) as cofactor.

It carries out the reaction 2-[(2R,5Z)-2-carboxy-4-methylthiazol-5(2H)-ylidene]ethyl phosphate + 4-amino-2-methyl-5-(diphosphooxymethyl)pyrimidine + 2 H(+) = thiamine phosphate + CO2 + diphosphate. The catalysed reaction is 2-(2-carboxy-4-methylthiazol-5-yl)ethyl phosphate + 4-amino-2-methyl-5-(diphosphooxymethyl)pyrimidine + 2 H(+) = thiamine phosphate + CO2 + diphosphate. It catalyses the reaction 4-methyl-5-(2-phosphooxyethyl)-thiazole + 4-amino-2-methyl-5-(diphosphooxymethyl)pyrimidine + H(+) = thiamine phosphate + diphosphate. Its pathway is cofactor biosynthesis; thiamine diphosphate biosynthesis; thiamine phosphate from 4-amino-2-methyl-5-diphosphomethylpyrimidine and 4-methyl-5-(2-phosphoethyl)-thiazole: step 1/1. In terms of biological role, condenses 4-methyl-5-(beta-hydroxyethyl)thiazole monophosphate (THZ-P) and 2-methyl-4-amino-5-hydroxymethyl pyrimidine pyrophosphate (HMP-PP) to form thiamine monophosphate (TMP). The protein is Thiamine-phosphate synthase of Bacillus cereus (strain 03BB102).